Consider the following 503-residue polypeptide: Glutamate--tRNA ligase 1 (503 aa).

A 'HIGH' region motif is present at residues Pro-17–Asn-27. The 'KMSKS' region signature appears at Lys-261–Arg-265. Residue Lys-264 coordinates ATP.

Belongs to the class-I aminoacyl-tRNA synthetase family. Glutamate--tRNA ligase type 1 subfamily. Monomer.

The protein localises to the cytoplasm. The catalysed reaction is tRNA(Glu) + L-glutamate + ATP = L-glutamyl-tRNA(Glu) + AMP + diphosphate. In terms of biological role, catalyzes the attachment of glutamate to tRNA(Glu) in a two-step reaction: glutamate is first activated by ATP to form Glu-AMP and then transferred to the acceptor end of tRNA(Glu). This is Glutamate--tRNA ligase 1 from Levilactobacillus brevis (strain ATCC 367 / BCRC 12310 / CIP 105137 / JCM 1170 / LMG 11437 / NCIMB 947 / NCTC 947) (Lactobacillus brevis).